Here is a 362-residue protein sequence, read N- to C-terminus: Peptide chain release factor 1 (362 aa).

Glutamine 237 is modified (N5-methylglutamine).

Belongs to the prokaryotic/mitochondrial release factor family. Post-translationally, methylated by PrmC. Methylation increases the termination efficiency of RF1.

The protein localises to the cytoplasm. Its function is as follows. Peptide chain release factor 1 directs the termination of translation in response to the peptide chain termination codons UAG and UAA. The sequence is that of Peptide chain release factor 1 from Aliivibrio salmonicida (strain LFI1238) (Vibrio salmonicida (strain LFI1238)).